The chain runs to 329 residues: Chlorophyllase-1, chloroplastic (329 aa).

The transit peptide at 1–21 (MAAMVDSKPAASVQGTPLLAT) directs the protein to the chloroplast. The short motif at 145-149 (GHSRG) is the GXSXG element. Catalysis depends on Ser147, which acts as the Nucleophile. Catalysis depends on charge relay system residues Asp169 and His242.

The protein belongs to the AB hydrolase superfamily. Lipase family.

Its subcellular location is the plastid. It localises to the chloroplast. The catalysed reaction is a chlorophyll + H2O = a chlorophyllide + phytol + H(+). The protein operates within porphyrin-containing compound metabolism; chlorophyll degradation. Catalyzes the hydrolysis of ester bond in chlorophyll to yield chlorophyllide and phytol. This Citrus unshiu (Satsuma mandarin) protein is Chlorophyllase-1, chloroplastic.